The following is a 389-amino-acid chain: MMSSPAKAAKLALEDGTVYTGTSLGAEGETTGEVVFNTSMTGYQEILTDPSYRGQLVTMTYPEMGNYGINSIDLENRGTSLAGFIIRNESRMHSNYRSEGSLSDYLNSQGVVGIAGIDTRALVRRIRSEGAMRGVLSTTDLDDASLVAKAKASPGLVGRDLVQEVMPTQLEKWTNELDDWTIREIREAAKDASIGDDSRPHVVCMDFGMKWNIPRHLRSRGNRVTIVPGNASADDILKMDPDGVFLSNGPGDPEPLTYAHKAIGELLGQVPVFGICLGHQLLSVACGAKTFKLKFGHRGANQPVLDLETGKVEITSQNHGFAVDDQGLPDCLEVTHRNLNDDTIAGVRHKDTGAFAVQYHPEAAAGPHDSHYLFSRFQEQLNEKCGVTA.

The interval 1–197 is CPSase; sequence MMSSPAKAAK…AAKDASIGDD (197 aa). Positions 51, 249, and 251 each coordinate L-glutamine. Positions 201-387 constitute a Glutamine amidotransferase type-1 domain; that stretch reads HVVCMDFGMK…QEQLNEKCGV (187 aa). The active-site Nucleophile is the Cys276. Leu277, Gln280, Asn318, Gly320, and Phe321 together coordinate L-glutamine. Active-site residues include His360 and Glu362.

Belongs to the CarA family. Composed of two chains; the small (or glutamine) chain promotes the hydrolysis of glutamine to ammonia, which is used by the large (or ammonia) chain to synthesize carbamoyl phosphate. Tetramer of heterodimers (alpha,beta)4.

The enzyme catalyses hydrogencarbonate + L-glutamine + 2 ATP + H2O = carbamoyl phosphate + L-glutamate + 2 ADP + phosphate + 2 H(+). It catalyses the reaction L-glutamine + H2O = L-glutamate + NH4(+). The protein operates within amino-acid biosynthesis; L-arginine biosynthesis; carbamoyl phosphate from bicarbonate: step 1/1. It participates in pyrimidine metabolism; UMP biosynthesis via de novo pathway; (S)-dihydroorotate from bicarbonate: step 1/3. Its function is as follows. Small subunit of the glutamine-dependent carbamoyl phosphate synthetase (CPSase). CPSase catalyzes the formation of carbamoyl phosphate from the ammonia moiety of glutamine, carbonate, and phosphate donated by ATP, constituting the first step of 2 biosynthetic pathways, one leading to arginine and/or urea and the other to pyrimidine nucleotides. The small subunit (glutamine amidotransferase) binds and cleaves glutamine to supply the large subunit with the substrate ammonia. The chain is Carbamoyl phosphate synthase small chain from Rhodopirellula baltica (strain DSM 10527 / NCIMB 13988 / SH1).